Here is a 224-residue protein sequence, read N- to C-terminus: 7-cyano-7-deazaguanine synthase (224 aa).

10 to 20 (LSGGLDSATVV) provides a ligand contact to ATP. Zn(2+) contacts are provided by cysteine 189, cysteine 199, cysteine 202, and cysteine 205.

Belongs to the QueC family. It depends on Zn(2+) as a cofactor.

The enzyme catalyses 7-carboxy-7-deazaguanine + NH4(+) + ATP = 7-cyano-7-deazaguanine + ADP + phosphate + H2O + H(+). It functions in the pathway purine metabolism; 7-cyano-7-deazaguanine biosynthesis. In terms of biological role, catalyzes the ATP-dependent conversion of 7-carboxy-7-deazaguanine (CDG) to 7-cyano-7-deazaguanine (preQ(0)). This Pseudomonas putida (strain W619) protein is 7-cyano-7-deazaguanine synthase.